A 598-amino-acid polypeptide reads, in one-letter code: MRNKICKELNNTDIGKLVNLCGWVDRRRDHGGVIFIDLRDHSGFLQITINPDDGAALFKQAETLRNETVIMVSGIINERPKDSINTNLSTGELELKVKDLQILNQIKKNLPFPVSIHDYENTKEELRLKYRYLDLRRGKLLENLKTRHKIIKVAREFLDNFGFTEVETPLLTKSTPEGARDFLVPARLSNGEFFALPQSPQLFKQLLMVGGLDKYYQIAKCFRDEDLRADRQPEFTQLDIEMSFISEEEIISFNESLIKKIWKEVLNIKFNNAFPRMSWQEAMDNYGTDRPDTRYQMLLKDLGGILGDIGFNIFTKAIKSGGYIKSITVKGGNSSISNVRIKPGGDIFQVAKDAGAGGLAFIRVKGDELETIGAIKNNLSEEHIADILKITEAKDGDLILLGAGDKLIVNQSLDRVRQYIAKDLNLIDKSKWNFLWVTDFPMFERNEEENRYEALHHPFCSPKNIKSKDSENLKKEIESSTANAYDLVLNGLELGGGSLRIHEANLQREVLKMVGLTDKEIDEKFGFLIEALEMGAPPHGGIAFGLDRITMLIIGTDSIRETIAFPKNQQAKCLLTNAPSNVSESQLKELDIEITIDE.

Glutamate 177 is a binding site for L-aspartate. The segment at 201–204 (QLFK) is aspartate. Arginine 223 serves as a coordination point for L-aspartate. Residues 223–225 (RDE) and glutamine 232 each bind ATP. Histidine 456 provides a ligand contact to L-aspartate. Glutamate 493 contacts ATP. An L-aspartate-binding site is contributed by arginine 500. 545 to 548 (GLDR) is an ATP binding site.

It belongs to the class-II aminoacyl-tRNA synthetase family. Type 1 subfamily. In terms of assembly, homodimer.

The protein resides in the cytoplasm. It catalyses the reaction tRNA(Asx) + L-aspartate + ATP = L-aspartyl-tRNA(Asx) + AMP + diphosphate. In terms of biological role, aspartyl-tRNA synthetase with relaxed tRNA specificity since it is able to aspartylate not only its cognate tRNA(Asp) but also tRNA(Asn). Reaction proceeds in two steps: L-aspartate is first activated by ATP to form Asp-AMP and then transferred to the acceptor end of tRNA(Asp/Asn). This chain is Aspartate--tRNA(Asp/Asn) ligase, found in Prochlorococcus marinus (strain MIT 9301).